We begin with the raw amino-acid sequence, 190 residues long: Cysteine dioxygenase (190 aa).

His78, His80, and His132 together coordinate Fe cation. The 3'-(S-cysteinyl)-tyrosine (Cys-Tyr) cross-link spans 85–149; it reads CFVKILDGEL…SNGAVSLHLY (65 aa).

It belongs to the cysteine dioxygenase family. Fe cation is required as a cofactor. In terms of processing, the thioether cross-link between Cys-85 and Tyr-149 plays a structural role through stabilizing the Fe(2+) ion, and prevents the production of highly damaging free hydroxyl radicals by holding the oxygen radical via hydroxyl hydrogen.

It catalyses the reaction L-cysteine + O2 = 3-sulfino-L-alanine + H(+). The protein operates within organosulfur biosynthesis; taurine biosynthesis; hypotaurine from L-cysteine: step 1/2. The polypeptide is Cysteine dioxygenase (cdo-1) (Caenorhabditis briggsae).